A 305-amino-acid chain; its full sequence is MKSDCSTSAAPFRGLGGPLRSSEPVRAAPARSPAVDLLEEAADLLVVHLDFRAALETCERAWQSLANHALPEEPAGTSLEVKCSLCVVGIQALAEMDRWQEVLSWVLQYYQVPEKLPPKVLELCILLYSKMQEPRAVLDVVGAWLQDPANQDLPEYGALAEFHVQRVLLPLGCLSEAEELVVGSAAFGEERRLDVLQAIHTARQQQQQEHSGSEEAQKPNEEGSVSHKFLSLPMLVRQLWDSAVSHFFSLPFKKSLLAALILCLLVVRFDPASPSSLPSLYKLAQLFRWIRKAASSRLYQLRIRD.

The disordered stretch occupies residues 1–25 (MKSDCSTSAAPFRGLGGPLRSSEPV). At 1–246 (MKSDCSTSAA…RQLWDSAVSH (246 aa)) the chain is on the cytoplasmic side. The chain crosses the membrane as a helical; Signal-anchor for type II membrane protein span at residues 247-267 (FFSLPFKKSLLAALILCLLVV). Residues 268–305 (RFDPASPSSLPSLYKLAQLFRWIRKAASSRLYQLRIRD) are Peroxisomal matrix-facing.

This sequence belongs to the peroxin-26 family. Interacts (via its cytoplasmic domain) with PEX6; interaction is direct and is ATP-dependent. Interacts with PEX1; interaction is indirect and is mediated via interaction with PEX6.

It is found in the peroxisome membrane. Functionally, peroxisomal docking factor that anchors PEX1 and PEX6 to peroxisome membranes. PEX26 is therefore required for the formation of the PEX1-PEX6 AAA ATPase complex, a complex that mediates the extraction of the PEX5 receptor from peroxisomal membrane. This is Peroxisome assembly protein 26 (PEX26) from Macaca fascicularis (Crab-eating macaque).